We begin with the raw amino-acid sequence, 466 residues long: Peptidyl-prolyl cis-trans isomerase CYP37, chloroplastic (466 aa).

Residues 1–65 (MASPLSSSTV…GTKELIHSCN (65 aa)) constitute a chloroplast transit peptide. The transit peptide at 66–114 (SSIDSKLNTFEAGSKNLEKLVATILIFVQVWSPLPLFGLDSAYISPAEA) directs the protein to the thylakoid. Residues 278–466 (TFSAEAGGDQ…VQNNNINEST (189 aa)) enclose the PPIase cyclophilin-type domain.

As to expression, aerial parts.

The protein resides in the plastid. It localises to the chloroplast thylakoid lumen. It catalyses the reaction [protein]-peptidylproline (omega=180) = [protein]-peptidylproline (omega=0). PPIases accelerate the folding of proteins. It catalyzes the cis-trans isomerization of proline imidic peptide bonds in oligopeptides. This chain is Peptidyl-prolyl cis-trans isomerase CYP37, chloroplastic (CYP37), found in Arabidopsis thaliana (Mouse-ear cress).